A 474-amino-acid chain; its full sequence is L-arabinose isomerase (474 aa).

Mn(2+) contacts are provided by glutamate 306, glutamate 331, histidine 348, and histidine 447.

It belongs to the arabinose isomerase family. Mn(2+) is required as a cofactor.

The enzyme catalyses beta-L-arabinopyranose = L-ribulose. Its pathway is carbohydrate degradation; L-arabinose degradation via L-ribulose; D-xylulose 5-phosphate from L-arabinose (bacterial route): step 1/3. Its function is as follows. Catalyzes the conversion of L-arabinose to L-ribulose. The sequence is that of L-arabinose isomerase from Pediococcus pentosaceus (strain ATCC 25745 / CCUG 21536 / LMG 10740 / 183-1w).